The sequence spans 233 residues: 7-cyano-7-deazaguanine synthase (233 aa).

Position 7–17 (7–17 (CSGGLDSVSLA)) interacts with ATP. The Zn(2+) site is built by Cys-185, Cys-193, Cys-196, and Cys-199.

Belongs to the QueC family. Requires Zn(2+) as cofactor.

It carries out the reaction 7-carboxy-7-deazaguanine + NH4(+) + ATP = 7-cyano-7-deazaguanine + ADP + phosphate + H2O + H(+). The protein operates within purine metabolism; 7-cyano-7-deazaguanine biosynthesis. Its function is as follows. Catalyzes the ATP-dependent conversion of 7-carboxy-7-deazaguanine (CDG) to 7-cyano-7-deazaguanine (preQ(0)). The protein is 7-cyano-7-deazaguanine synthase of Paracoccus denitrificans (strain Pd 1222).